We begin with the raw amino-acid sequence, 312 residues long: Pyridoxal kinase (312 aa).

N-acetylmethionine is present on M1. Positions 12 and 47 each coordinate pyridoxal. T47 is a pyridoxal 5'-phosphate binding site. S59 bears the Phosphoserine mark. D113 lines the ATP pocket. Residue D113 coordinates Na(+). D118 provides a ligand contact to Mg(2+). Residue T148 participates in Na(+) binding. 150–153 serves as a coordination point for ATP; that stretch reads NQFE. Position 164 is a phosphoserine (S164). T186 provides a ligand contact to Na(+). 186-187 is a binding site for ATP; the sequence is TS. S213 is subject to Phosphoserine. ATP contacts are provided by residues 226-228 and T233; that span reads VEA. Position 234-235 (234-235) interacts with pyridoxal 5'-phosphate; the sequence is GD. The Proton acceptor role is filled by D235. Position 285 is a phosphoserine (S285).

Belongs to the pyridoxine kinase family. In terms of assembly, homodimer. The cofactor is Zn(2+). Mg(2+) is required as a cofactor.

The protein localises to the cytoplasm. Its subcellular location is the cytosol. The enzyme catalyses pyridoxal + ATP = pyridoxal 5'-phosphate + ADP + H(+). The catalysed reaction is pyridoxamine + ATP = pyridoxamine 5'-phosphate + ADP + H(+). It catalyses the reaction pyridoxine + ATP = pyridoxine 5'-phosphate + ADP + H(+). Its pathway is cofactor metabolism; pyridoxal 5'-phosphate salvage; pyridoxal 5'-phosphate from pyridoxal: step 1/1. The protein operates within cofactor metabolism; pyridoxal 5'-phosphate salvage; pyridoxine 5'-phosphate from pyridoxine: step 1/1. It participates in cofactor metabolism; pyridoxal 5'-phosphate salvage; pyridoxamine 5'-phosphate from pyridoxamine: step 1/1. Its activity is regulated as follows. Activity is increased in the presence of K(+)or Na(+). Functionally, catalyzes the phosphorylation of the dietary vitamin B6 vitamers pyridoxal (PL), pyridoxine (PN) and pyridoxamine (PM) to form pyridoxal 5'-phosphate (PLP), pyridoxine 5'-phosphate (PNP) and pyridoxamine 5'-phosphate (PMP), respectively. PLP is the active form of vitamin B6, and acts as a cofactor for over 140 different enzymatic reactions. This chain is Pyridoxal kinase, found in Mus musculus (Mouse).